The sequence spans 190 residues: Peptidyl-tRNA hydrolase (190 aa).

A tRNA-binding site is contributed by Y18. H23 serves as the catalytic Proton acceptor. Residues F67, N69, and N115 each coordinate tRNA.

The protein belongs to the PTH family. In terms of assembly, monomer.

The protein resides in the cytoplasm. It catalyses the reaction an N-acyl-L-alpha-aminoacyl-tRNA + H2O = an N-acyl-L-amino acid + a tRNA + H(+). In terms of biological role, hydrolyzes ribosome-free peptidyl-tRNAs (with 1 or more amino acids incorporated), which drop off the ribosome during protein synthesis, or as a result of ribosome stalling. Its function is as follows. Catalyzes the release of premature peptidyl moieties from peptidyl-tRNA molecules trapped in stalled 50S ribosomal subunits, and thus maintains levels of free tRNAs and 50S ribosomes. In Leptospira interrogans serogroup Icterohaemorrhagiae serovar Lai (strain 56601), this protein is Peptidyl-tRNA hydrolase.